The following is a 397-amino-acid chain: Enoyl-[acyl-carrier-protein] reductase [NADH] (397 aa).

Residues 48–53, 74–75, 111–112, and 139–140 each bind NAD(+); these read GASTGY, FE, DA, and VA. Tyr225 contributes to the substrate binding site. Tyr235 acts as the Proton donor in catalysis. NAD(+) contacts are provided by residues Lys244 and 273-275; that span reads VVT.

Belongs to the TER reductase family. Monomer.

It carries out the reaction a 2,3-saturated acyl-[ACP] + NAD(+) = a (2E)-enoyl-[ACP] + NADH + H(+). The protein operates within lipid metabolism; fatty acid biosynthesis. Its function is as follows. Involved in the final reduction of the elongation cycle of fatty acid synthesis (FAS II). Catalyzes the reduction of a carbon-carbon double bond in an enoyl moiety that is covalently linked to an acyl carrier protein (ACP). The chain is Enoyl-[acyl-carrier-protein] reductase [NADH] from Burkholderia mallei (strain NCTC 10247).